A 799-amino-acid chain; its full sequence is Zinc finger X-chromosomal protein (799 aa).

At Ser-269 the chain carries Phosphoserine. C2H2-type zinc fingers lie at residues 419 to 444 (YPCM…HPEH), 450 to 472 (YRCT…LESH), 482 to 504 (IECD…KMVH), 513 to 536 (HKCK…LAVH), 542 to 564 (HICV…MRIH), 570 to 593 (YECQ…KTKH), 599 to 621 (FKCD…ALVH), 627 to 650 (HQCL…ISVH), 656 to 678 (HKCD…VAAH), 684 to 707 (HQCR…LSVH), 713 to 735 (FRCK…MKTH), 741 to 764 (YQCE…ISIH), and 770 to 792 (HRCE…IMRH).

This sequence belongs to the krueppel C2H2-type zinc-finger protein family. ZFX/ZFY subfamily.

The protein resides in the nucleus. In terms of biological role, probable transcriptional activator. This chain is Zinc finger X-chromosomal protein (Zfx), found in Mus musculus (Mouse).